We begin with the raw amino-acid sequence, 739 residues long: Catalase-peroxidase 1 (739 aa).

Residues 1–33 (MPEDRPIEDSPPIGEAQTDAPAGGCPAGFGRIK) are disordered. Positions 113-236 (WHAAGTYRVS…LAAVQMGLIY (124 aa)) form a cross-link, tryptophyl-tyrosyl-methioninium (Trp-Tyr) (with M-262). Residue H114 is the Proton acceptor of the active site. A cross-link (tryptophyl-tyrosyl-methioninium (Tyr-Met) (with W-113)) is located at residues 236–262 (YVNPEGPNGNPDPQASAIDIRETFGRM). H277 contacts heme b.

It belongs to the peroxidase family. Peroxidase/catalase subfamily. Homodimer or homotetramer. Heme b serves as cofactor. In terms of processing, formation of the three residue Trp-Tyr-Met cross-link is important for the catalase, but not the peroxidase activity of the enzyme.

The enzyme catalyses H2O2 + AH2 = A + 2 H2O. It catalyses the reaction 2 H2O2 = O2 + 2 H2O. Bifunctional enzyme with both catalase and broad-spectrum peroxidase activity. May play a role in the intracellular survival of mycobacteria. The polypeptide is Catalase-peroxidase 1 (Mycolicibacterium smegmatis (strain ATCC 700084 / mc(2)155) (Mycobacterium smegmatis)).